Reading from the N-terminus, the 118-residue chain is Acidic phospholipase A2 PA-3 (118 aa).

7 disulfides stabilise this stretch: C11–C71, C27–C117, C29–C45, C44–C98, C51–C91, C60–C84, and C78–C89. Ca(2+) contacts are provided by Y28, G30, and G32. H48 is a catalytic residue. D49 lines the Ca(2+) pocket. D92 is an active-site residue.

The protein belongs to the phospholipase A2 family. Group I subfamily. D49 sub-subfamily. The cofactor is Ca(2+). Expressed by the venom gland.

It localises to the secreted. It catalyses the reaction a 1,2-diacyl-sn-glycero-3-phosphocholine + H2O = a 1-acyl-sn-glycero-3-phosphocholine + a fatty acid + H(+). PLA2 catalyzes the calcium-dependent hydrolysis of the 2-acyl groups in 3-sn-phosphoglycerides. The polypeptide is Acidic phospholipase A2 PA-3 (Pseudechis australis (Mulga snake)).